We begin with the raw amino-acid sequence, 350 residues long: 4-hydroxy-2-oxovalerate aldolase 2 (350 aa).

The Pyruvate carboxyltransferase domain maps to 8 to 260 (ITVHDMTLRD…ETGVDVFKIQ (253 aa)). Substrate is bound at residue 16-17 (RD). Asp17 is a binding site for Mn(2+). Residue His20 is the Proton acceptor of the active site. Residues Ser170 and His199 each coordinate substrate. Mn(2+) contacts are provided by His199 and His201. Tyr290 contributes to the substrate binding site.

It belongs to the 4-hydroxy-2-oxovalerate aldolase family.

The enzyme catalyses (S)-4-hydroxy-2-oxopentanoate = acetaldehyde + pyruvate. The chain is 4-hydroxy-2-oxovalerate aldolase 2 (tesG) from Comamonas testosteroni (Pseudomonas testosteroni).